We begin with the raw amino-acid sequence, 1985 residues long: Non-reducing polyketide synthase ntnG (1985 aa).

The tract at residues 7–243 (LLFGDQADAP…TILPAFGAVH (237 aa)) is N-terminal acylcarrier protein transacylase (SAT) domain. The region spanning 364 to 792 (SGSVAIIGMS…GGNSCFVLEE (429 aa)) is the Ketosynthase family 3 (KS3) domain. Catalysis depends on for beta-ketoacyl synthase activity residues Cys536, His671, and His711. A malonyl-CoA:ACP transacylase (MAT) domain region spans residues 889 to 1148 (VFAFTGQGAH…VNFEQAISHC (260 aa)). The active-site For acyl/malonyl transferase activity is the Ser980. An N-terminal hotdog fold region spans residues 1261 to 1392 (HRLVKQEDTA…VRLRDEHAFD (132 aa)). The PKS/mFAS DH domain occupies 1261 to 1567 (HRLVKQEDTA…FRKMPRTTLH (307 aa)). The interval 1265–1566 (KQEDTAKEQH…RFRKMPRTTL (302 aa)) is product template (PT) domain. Residue His1293 is the Proton acceptor; for dehydratase activity of the active site. The interval 1414-1567 (AGGRANRFQG…FRKMPRTTLH (154 aa)) is C-terminal hotdog fold. The Proton donor; for dehydratase activity role is filled by Asp1479. A compositionally biased stretch (polar residues) spans 1578-1605 (NTKQVPHPTTNGSAIANGVNRNPSHNEP). Residues 1578–1622 (NTKQVPHPTTNGSAIANGVNRNPSHNEPSTPPVANGVNGTNGDQS) are disordered. One can recognise a Carrier domain in the interval 1622–1699 (SDRKSLYSVL…DAQRELRRLE (78 aa)). Position 1659 is an O-(pantetheine 4'-phosphoryl)serine (Ser1659). Positions 1719-1913 (TRECNVVLMQ…DCTFVIWAKK (195 aa)) are thioesterase (TE) domain.

Its pathway is secondary metabolite biosynthesis; terpenoid biosynthesis. Its function is as follows. Non-reducing polyketide synthase; part of the gene cluster that mediates the biosynthesis of the meroterpenoids nectripenoids A and B, as well as cochliquninone D and isocochliquninone E. The pathway probably begins with the HR-PKS ntnH that catalyzes two chain-extension steps to form a reduced triketide, which then primes the SAT domain in the NR-PKS ntnG to initiate three more cycles of extension to give a linear hexaketide corresponding to the polyketide part of nectripenoids. The FAD-dependent monooxygenase ntnJ then performs an oxidative decarboxylation at C11 of the ntnH/ntnG product, via an electrophilic aromatic hydroxylation with concomitant ipso-decarboxylation. The membrane-bound polyprenyl transferase ntnF then introduces a farnesyl group before the FAD-dependent monooxygenase ntnK functions as the first epoxidase on terminal C12'-C13' olefin, followed by a second epoxidation on C7'-C8' catalyzed by ntnA. The terpene cyclase/mutase ntnI then initiates the sequential tricyclic ring formation through protonation of the terminal epoxide and catalyzes the regioselective and stereoselective 6/6/6-tricyclic ring formation. The cytochrome P450 monooxygenase ntnM may then hydroxylate C1'. The protein is Non-reducing polyketide synthase ntnG of Nectria sp.